Consider the following 159-residue polypeptide: MTSEPYWKTKRLDEMNTVEWEALCDGCGLCCLNKLEDWESGEVVFTSVACRLLDGESCRCKDYPNRQATVPDCIQLTPDQVEDIAWLPPSCGYRLVHEGRDLYWWHPLVSGDPETVHQAGISARGRTVSEEHVSVEDFEDYLCDWPMTVLLQAEESGDQ.

This sequence belongs to the UPF0260 family.

The chain is UPF0260 protein Avi_1324 from Allorhizobium ampelinum (strain ATCC BAA-846 / DSM 112012 / S4) (Agrobacterium vitis (strain S4)).